Consider the following 874-residue polypeptide: Alanine--tRNA ligase (874 aa).

Residues histidine 563, histidine 567, cysteine 665, and histidine 669 each contribute to the Zn(2+) site.

Belongs to the class-II aminoacyl-tRNA synthetase family. Zn(2+) serves as cofactor.

It is found in the cytoplasm. It catalyses the reaction tRNA(Ala) + L-alanine + ATP = L-alanyl-tRNA(Ala) + AMP + diphosphate. Functionally, catalyzes the attachment of alanine to tRNA(Ala) in a two-step reaction: alanine is first activated by ATP to form Ala-AMP and then transferred to the acceptor end of tRNA(Ala). Also edits incorrectly charged Ser-tRNA(Ala) and Gly-tRNA(Ala) via its editing domain. This chain is Alanine--tRNA ligase, found in Actinobacillus pleuropneumoniae serotype 3 (strain JL03).